Consider the following 168-residue polypeptide: Protein GRIM REAPER (168 aa).

The first 30 residues, 1-30, serve as a signal peptide directing secretion; the sequence is MVIKIPNTFIKATSLLSLILYFLIIATSKS. A glycan (N-linked (GlcNAc...) asparagine) is linked at Asn-59.

This sequence belongs to the STIG1 family. As to quaternary structure, interacts with PRK5 and to a lower extent with PRK4. In terms of tissue distribution, highly expressed in flowers, and at very low levels in leaves.

Its subcellular location is the secreted. It is found in the extracellular space. The protein localises to the apoplast. Involved in the regulation of cell death induced by extracellular reactive oxygen species. Only the processed peptide, and not the full length GRI can bind in vivo to the extracellular domain of the receptor PRK5. The GRIp-induced cell death is superoxide and salicylic acid dependent. The sequence is that of Protein GRIM REAPER from Arabidopsis thaliana (Mouse-ear cress).